The following is a 74-amino-acid chain: MPKYYEDKPQGGACAGLKEDLGACLLQSDCVVQEGKSPRQCLKEGYCNSLKYAFFECKRSVLDNRARFRGRKGY.

The CHCH domain occupies 27-65 (QSDCVVQEGKSPRQCLKEGYCNSLKYAFFECKRSVLDNR). A Cx10C motif motif is present at residues 30–41 (CVVQEGKSPRQC). Cystine bridges form between cysteine 30–cysteine 57 and cysteine 41–cysteine 47. Serine 37 is subject to Phosphoserine. The Cx9C motif motif lies at 47 to 57 (CNSLKYAFFEC).

This sequence belongs to the PET191 family.

In terms of biological role, involved in an early step of the mitochondrial complex IV assembly process. In Homo sapiens (Human), this protein is Cytochrome c oxidase assembly factor 5 (COA5).